The sequence spans 430 residues: Adenylosuccinate synthetase (430 aa).

GTP contacts are provided by residues 12-18 (GDEGKGK) and 40-42 (GHT). The Proton acceptor role is filled by Asp13. The Mg(2+) site is built by Asp13 and Gly40. Residues 13–16 (DEGK), 38–41 (NAGH), Thr128, Arg142, Gln223, Thr238, and Arg302 each bind IMP. The active-site Proton donor is the His41. 298-304 (TTTGRPR) contacts substrate. GTP-binding positions include Arg304, 330-332 (SID), and 413-415 (SVG).

It belongs to the adenylosuccinate synthetase family. In terms of assembly, homodimer. Mg(2+) serves as cofactor.

It is found in the cytoplasm. It carries out the reaction IMP + L-aspartate + GTP = N(6)-(1,2-dicarboxyethyl)-AMP + GDP + phosphate + 2 H(+). It functions in the pathway purine metabolism; AMP biosynthesis via de novo pathway; AMP from IMP: step 1/2. Its function is as follows. Plays an important role in the de novo pathway of purine nucleotide biosynthesis. Catalyzes the first committed step in the biosynthesis of AMP from IMP. This Lactococcus lactis subsp. cremoris (strain SK11) protein is Adenylosuccinate synthetase.